The primary structure comprises 465 residues: Phosphomannomutase/phosphoglucomutase (465 aa).

The Phosphoserine intermediate role is filled by serine 110. Residues serine 110, aspartate 244, aspartate 246, and aspartate 248 each contribute to the Mg(2+) site. Residues glutamate 327, serine 329, and histidine 331 each contribute to the substrate site.

It belongs to the phosphohexose mutase family. In terms of assembly, monomer. Mg(2+) is required as a cofactor.

It catalyses the reaction alpha-D-mannose 1-phosphate = D-mannose 6-phosphate. The enzyme catalyses alpha-D-glucose 1-phosphate = alpha-D-glucose 6-phosphate. Its pathway is nucleotide-sugar biosynthesis; GDP-alpha-D-mannose biosynthesis; alpha-D-mannose 1-phosphate from D-fructose 6-phosphate: step 2/2. It functions in the pathway bacterial outer membrane biogenesis; lipopolysaccharide biosynthesis. The phosphomannomutase activity produces a precursor for alginate polymerization. The alginate layer causes a mucoid phenotype and provides a protective barrier against host immune defenses and antibiotics. Also involved in core-LPS biosynthesis due to its phosphoglucomutase activity. Essential for biofilm production. This chain is Phosphomannomutase/phosphoglucomutase (algC), found in Pseudomonas syringae pv. tomato (strain ATCC BAA-871 / DC3000).